Reading from the N-terminus, the 354-residue chain is UDP-N-acetylglucosamine--N-acetylmuramyl-(pentapeptide) pyrophosphoryl-undecaprenol N-acetylglucosamine transferase (354 aa).

Residues 15–17 (TGG), N127, R163, S191, I244, 263–268 (ALTVSE), and Q288 each bind UDP-N-acetyl-alpha-D-glucosamine.

This sequence belongs to the glycosyltransferase 28 family. MurG subfamily.

The protein resides in the cell inner membrane. It catalyses the reaction di-trans,octa-cis-undecaprenyl diphospho-N-acetyl-alpha-D-muramoyl-L-alanyl-D-glutamyl-meso-2,6-diaminopimeloyl-D-alanyl-D-alanine + UDP-N-acetyl-alpha-D-glucosamine = di-trans,octa-cis-undecaprenyl diphospho-[N-acetyl-alpha-D-glucosaminyl-(1-&gt;4)]-N-acetyl-alpha-D-muramoyl-L-alanyl-D-glutamyl-meso-2,6-diaminopimeloyl-D-alanyl-D-alanine + UDP + H(+). Its pathway is cell wall biogenesis; peptidoglycan biosynthesis. Cell wall formation. Catalyzes the transfer of a GlcNAc subunit on undecaprenyl-pyrophosphoryl-MurNAc-pentapeptide (lipid intermediate I) to form undecaprenyl-pyrophosphoryl-MurNAc-(pentapeptide)GlcNAc (lipid intermediate II). This is UDP-N-acetylglucosamine--N-acetylmuramyl-(pentapeptide) pyrophosphoryl-undecaprenol N-acetylglucosamine transferase from Vibrio cholerae serotype O1 (strain ATCC 39541 / Classical Ogawa 395 / O395).